The following is a 525-amino-acid chain: Histidine-rich glycoprotein (525 aa).

A signal peptide spans 1–18 (MKVLTTALLLVTLQCSHA). Residues 19 to 122 (LSPTNCDASE…ESQDLSVNGY (104 aa)) form the Cystatin 1 domain. 5 disulfides stabilise this stretch: cysteine 24/cysteine 504, cysteine 78/cysteine 89, cysteine 103/cysteine 124, cysteine 201/cysteine 414, and cysteine 216/cysteine 239. Residues 41-84 (GRRSGYVFELLRVSDAHLDRAGTATVYYLALDVIESDCWVLSTK) are interaction with ATP5F1A. N-linked (GlcNAc...) asparagine glycans are attached at residues asparagine 112, asparagine 123, and asparagine 200. The 106-residue stretch at 135 to 240 (NTKDSPVLLD…TPDSIDINCE (106 aa)) folds into the Cystatin 2 domain. The tract at residues 273-447 (GSRDHHHTHK…SRKRGPGKGL (175 aa)) is disordered. Basic and acidic residues predominate over residues 293–303 (EGKDNSDRPRL). Asparagine 322 and asparagine 330 each carry an N-linked (GlcNAc...) asparagine glycan. Residues 339-404 (HGHRPHGHHP…GHHPHGHHPH (66 aa)) show a composition bias toward basic residues. The necessary for endothelial cell focal adhesions and anti-angiogenic activities stretch occupies residues 345-379 (GHHPHSHHPPGHHSHGHHPHGHHPHSHHSHGHHPP). Phosphoserine is present on serine 438.

In terms of assembly, interacts with THBS1 (via the TSP type I repeats); the interaction blocks the antiangiogenic effect of THBS1 with CD36. Interacts with HPSE; the interaction is enhanced at acidic pH, partially inhibits binding of HPSE to cell surface receptors and modulates its enzymatic activity. Interacts (via the HRR domain) with TMP1; the interaction partially mediates the antiangiogenic properties of HRG. Interacts with kappa and lambda light chains of IgG molecules. Interacts with ATP5F1A; the interaction occurs on the surface of T-cells and alters their cell morphology in concert with CONA. Binds IgG molecules containing kappa and lambda light chains and inhibits the formation of insoluble immunoglobulin complexes. Interacts with F12; the interaction, which is enhanced in the presence of zinc ions and inhibited by heparin-binding to HRG, inhibits factor XII autoactivation and contact-initiated coagulation. Interacts with PLG (via its Kringle domains); the interaction tethers PLG to the cell surface and enhances its activation. Interacts (via the HRR domain) with TPM1; the interaction appears to contribute to the antiangiogenic properties of the HRR domain. Interacts with THBS2; the interaction blocks the antiangiogenic effect of THBS2 with CD36. The cofactor is Zn(2+). Proteolytic cleavage produces several HRG fragments which are mostly disulfide-linked and, therefore, not released. Cleavage by plasmin is inhibited in the presence of heparin, zinc ions or in an acidic environment. Cleavage reduces binding of HRG to heparan sulfate, but enhances the ability of HRG to bind and tether plasminogen to the cell surface. On platelet activation, releases a 33 kDa antiangiogenic peptide which encompasses the HRR. Also cleaved in the C-terminal by plasmin. Post-translationally, N-glycosylated. As to expression, expressed in liver, blood plasma, serum and in platelets. Also present in fibrin clots, wound fluid from acute wounds and chronic leg ulcers.

The protein resides in the secreted. Functionally, plasma glycoprotein that binds a number of ligands such as heme, heparin, heparan sulfate, thrombospondin, plasminogen, and divalent metal ions. Binds heparin and heparin/glycosaminoglycans in a zinc-dependent manner. Binds heparan sulfate on the surface of liver, lung, kidney and heart endothelial cells. Binds to N-sulfated polysaccharide chains on the surface of liver endothelial cells. Inhibits rosette formation. Acts as an adapter protein and is implicated in regulating many processes such as immune complex and pathogen clearance, cell chemotaxis, cell adhesion, angiogenesis, coagulation and fibrinolysis. Mediates clearance of necrotic cells through enhancing the phagocytosis of necrotic cells in a heparan sulfate-dependent pathway. This process can be regulated by the presence of certain HRG ligands such as heparin and zinc ions. Binds to IgG subclasses of immunoglobins containing kappa and lambda light chains with different affinities regulating their clearance and inhibiting the formation of insoluble immune complexes. Tethers plasminogen to the cell surface. Binds T-cells and alters the cell morphology. Acts as a regulator of the vascular endothelial growth factor (VEGF) signaling pathway; inhibits endothelial cell motility by reducing VEGF-induced complex formation between PXN/paxillin and ILK/integrin-linked protein kinase and by promoting inhibition of VEGF-induced tyrosine phosphorylation of focal adhesion kinases and alpha-actinins in endothelial cells. Also plays a role in the regulation of tumor angiogenesis and tumor immune surveillance. Normalizes tumor vessels and promotes antitumor immunity by polarizing tumor-associated macrophages, leading to decreased tumor growth and metastasis. Modulates angiogenesis by blocking the CD6-mediated antiangiongenic effect of thrombospondins, THBS1 and THBS2. The protein is Histidine-rich glycoprotein (Hrg) of Mus musculus (Mouse).